Consider the following 170-residue polypeptide: Superoxide dismutase [Fe] (170 aa).

Fe cation-binding residues include H27, H81, D163, and H167.

It belongs to the iron/manganese superoxide dismutase family. As to quaternary structure, homodimer. The cofactor is Fe cation.

It catalyses the reaction 2 superoxide + 2 H(+) = H2O2 + O2. In terms of biological role, destroys superoxide anion radicals which are normally produced within the cells and which are toxic to biological systems. In Raoultella planticola (Klebsiella planticola), this protein is Superoxide dismutase [Fe] (sodA).